Reading from the N-terminus, the 472-residue chain is Serine incorporator 3 (472 aa).

Residues 1–96 (MGAVLGVFSL…KDCDVLVGFK (96 aa)) are Extracellular-facing. N-linked (GlcNAc...) asparagine glycosylation occurs at Asn-34. A helical membrane pass occupies residues 97 to 117 (AVYRINFAVAIFFFAFFLLML). At 118–132 (KVKTSKDPRAAVHNG) the chain is on the cytoplasmic side. Residues 133–153 (FWFFKIAAIIGIMIGSFYIPG) traverse the membrane as a helical segment. The Extracellular portion of the chain corresponds to 154 to 158 (GSFTE). The chain crosses the membrane as a helical span at residues 159–179 (VWFVAGMLGASFFIIIQLVLL). Residues 180 to 206 (VDMAHSWNELWVNRMEEGNPRLWYAAL) lie on the Cytoplasmic side of the membrane. A helical membrane pass occupies residues 207–227 (LSFTSLFYILSIVFAALLYVF). The Extracellular portion of the chain corresponds to 228-238 (YTKPDDCTENK). Residues 239 to 259 (VFISLNLIFCVAVSIVSILPK) form a helical membrane-spanning segment. At 260-329 (VQEHQPRSGL…APAYAPPSQS (70 aa)) the chain is on the cytoplasmic side. Residues 330–350 (GHFMNLDDIWGLIIFVFCLIY) traverse the membrane as a helical segment. At 351-405 (SSFRTSSNSQVNKLTLSGSDSVILGDTTNGANDEEDGQPRRAVDNEKEGVQYSYS) the chain is on the extracellular side. Phosphoserine is present on Ser-371. Residues 406 to 426 (FFHLMLCCASLYIMMTITSWY) traverse the membrane as a helical segment. At 427 to 445 (SPDAKFQKVSSKWLAVWFK) the chain is on the cytoplasmic side. Residues 446–466 (MGSSWLCLLLYLWTLVAPLVL) traverse the membrane as a helical segment. Residues 467–472 (TGRDFS) lie on the Extracellular side of the membrane.

It belongs to the TDE1 family. N-glycosylated. Highly expressed in the neuronal populations such as Purkinje cells in the cerebellum, brainstem and spinal motor neurons, locus coeruleus and raphe nuclei. Highly expressed also in thymus, kidney liver and testis.

The protein localises to the cell membrane. It is found in the golgi apparatus membrane. The enzyme catalyses a 1,2-diacyl-sn-glycero-3-phospho-L-serine(in) = a 1,2-diacyl-sn-glycero-3-phospho-L-serine(out). The catalysed reaction is a 1,2-diacyl-sn-glycero-3-phosphocholine(in) = a 1,2-diacyl-sn-glycero-3-phosphocholine(out). It catalyses the reaction a 1,2-diacyl-sn-glycero-3-phosphoethanolamine(in) = a 1,2-diacyl-sn-glycero-3-phosphoethanolamine(out). In terms of biological role, restriction factor required to restrict infectivity of gammaretroviruses: acts by inhibiting an early step of viral infection. Impairs the penetration of the viral particle into the cytoplasm. Non-ATP-dependent, non-specific lipid transporter for phosphatidylserine, phosphatidylcholine, and phosphatidylethanolamine. Functions as a scramblase that flips lipids in both directions across the membrane. Phospholipid scrambling results in gammaretroviral surface exposure of phosphatidylserine and loss of membrane asymmetry, which leads to loss of infectivity. This is Serine incorporator 3 (Serinc3) from Mus musculus (Mouse).